A 551-amino-acid polypeptide reads, in one-letter code: Malate synthase, glyoxysomal (551 aa).

Arg174 acts as the Proton acceptor in catalysis. The Proton donor role is filled by Asp458.

It belongs to the malate synthase family.

The protein resides in the glyoxysome. The enzyme catalyses glyoxylate + acetyl-CoA + H2O = (S)-malate + CoA + H(+). Its pathway is carbohydrate metabolism; glyoxylate cycle; (S)-malate from isocitrate: step 2/2. This is Malate synthase, glyoxysomal (PMS1) from Candida tropicalis (Yeast).